A 213-amino-acid chain; its full sequence is Large ribosomal subunit protein uL3 (213 aa).

At Gln151 the chain carries N5-methylglutamine.

It belongs to the universal ribosomal protein uL3 family. In terms of assembly, part of the 50S ribosomal subunit. Forms a cluster with proteins L14 and L19. Post-translationally, methylated by PrmB.

Its function is as follows. One of the primary rRNA binding proteins, it binds directly near the 3'-end of the 23S rRNA, where it nucleates assembly of the 50S subunit. The sequence is that of Large ribosomal subunit protein uL3 from Allorhizobium ampelinum (strain ATCC BAA-846 / DSM 112012 / S4) (Agrobacterium vitis (strain S4)).